The chain runs to 496 residues: Probable cytosol aminopeptidase (496 aa).

Lys266 and Asp271 together coordinate Mn(2+). Residue Lys278 is part of the active site. Residues Asp289, Asp348, and Glu350 each contribute to the Mn(2+) site. Arg352 is an active-site residue.

It belongs to the peptidase M17 family. Mn(2+) is required as a cofactor.

It localises to the cytoplasm. The catalysed reaction is Release of an N-terminal amino acid, Xaa-|-Yaa-, in which Xaa is preferably Leu, but may be other amino acids including Pro although not Arg or Lys, and Yaa may be Pro. Amino acid amides and methyl esters are also readily hydrolyzed, but rates on arylamides are exceedingly low.. It catalyses the reaction Release of an N-terminal amino acid, preferentially leucine, but not glutamic or aspartic acids.. Functionally, presumably involved in the processing and regular turnover of intracellular proteins. Catalyzes the removal of unsubstituted N-terminal amino acids from various peptides. The protein is Probable cytosol aminopeptidase of Azotobacter vinelandii (strain DJ / ATCC BAA-1303).